Consider the following 145-residue polypeptide: 3-dehydroquinate dehydratase (145 aa).

The active-site Proton acceptor is Tyr22. Substrate is bound by residues Asn74, His80, and Asp87. The active-site Proton donor is His100. Residues 101–102 (IS) and Arg111 contribute to the substrate site.

This sequence belongs to the type-II 3-dehydroquinase family. Homododecamer.

It carries out the reaction 3-dehydroquinate = 3-dehydroshikimate + H2O. It functions in the pathway metabolic intermediate biosynthesis; chorismate biosynthesis; chorismate from D-erythrose 4-phosphate and phosphoenolpyruvate: step 3/7. Functionally, catalyzes a trans-dehydration via an enolate intermediate. The protein is 3-dehydroquinate dehydratase of Lachnoclostridium phytofermentans (strain ATCC 700394 / DSM 18823 / ISDg) (Clostridium phytofermentans).